The chain runs to 453 residues: Gamma-glutamylpolyamine synthetase GlnA2 (453 aa).

Residues 15–100 enclose the GS beta-grasp domain; that stretch reads RDIRFVRLWF…MFCDILMPDG (86 aa). One can recognise a GS catalytic domain in the interval 107-453; the sequence is PRYVLKRALA…FELRKSLPVL (347 aa). Positions 130 and 132 each coordinate Mg(2+). Glu182 lines the ATP pocket. 2 residues coordinate Mg(2+): Glu187 and Glu194. Gly239 contacts L-glutamate. His243 serves as a coordination point for Mg(2+). An ATP-binding site is contributed by 245-247; sequence HLS. Arg296, Glu310, and Arg322 together coordinate L-glutamate. ATP-binding residues include Arg322 and Arg327. A Mg(2+)-binding site is contributed by Glu342. Arg344 contributes to the L-glutamate binding site.

It belongs to the glutamine synthetase family. Mg(2+) serves as cofactor.

It catalyses the reaction putrescine + L-glutamate + ATP = gamma-L-glutamylputrescine + ADP + phosphate + H(+). The catalysed reaction is spermine + L-glutamate + ATP = gamma-L-glutamylspermine + ADP + phosphate + H(+). It carries out the reaction spermidine + L-glutamate + ATP = gamma-L-glutamylspermidine + ADP + phosphate + H(+). The enzyme catalyses cadaverine + L-glutamate + ATP = gamma-L-glutamylcadaverine + ADP + phosphate + H(+). It participates in amine and polyamine degradation; putrescine degradation. It functions in the pathway amine and polyamine degradation; spermidine degradation. The protein operates within amine and polyamine degradation; spermine degradation. Its activity is regulated as follows. No effect on activity with glutamine synthetase (GS) inhibitor methionine sulfoximine (MSO). Involved in the catabolism of polyamines. Catalyzes the ATP-dependent gamma-glutamylation of polyamines. Substrates include putrescine, cadaverine, spermidine and spermine, with a preference for short-chain polyamine putrescine. No complementation of the L-glutamine auxotrophy of an E.coli glnA mutant. Together with GlnA3, enables survival of S.coelicolor under exposure to high local environmental polyamine concentrations, which is toxic to the cells. The chain is Gamma-glutamylpolyamine synthetase GlnA2 from Streptomyces coelicolor (strain ATCC BAA-471 / A3(2) / M145).